Here is an 84-residue protein sequence, read N- to C-terminus: Small ribosomal subunit protein uS17c (84 aa).

It belongs to the universal ribosomal protein uS17 family. As to quaternary structure, part of the 30S ribosomal subunit.

It localises to the plastid. The protein localises to the chloroplast. One of the primary rRNA binding proteins, it binds specifically to the 5'-end of 16S ribosomal RNA. In Phaeodactylum tricornutum (strain CCAP 1055/1), this protein is Small ribosomal subunit protein uS17c (rps17).